The following is a 274-amino-acid chain: Large ribosomal subunit protein uL2 (274 aa).

Residues 221–256 are disordered; that stretch reads RGTAMNPVDHPHGGGEGRNFGKHPVTPWGVPTKGYK.

It belongs to the universal ribosomal protein uL2 family. Part of the 50S ribosomal subunit. Forms a bridge to the 30S subunit in the 70S ribosome.

In terms of biological role, one of the primary rRNA binding proteins. Required for association of the 30S and 50S subunits to form the 70S ribosome, for tRNA binding and peptide bond formation. It has been suggested to have peptidyltransferase activity; this is somewhat controversial. Makes several contacts with the 16S rRNA in the 70S ribosome. This is Large ribosomal subunit protein uL2 from Hahella chejuensis (strain KCTC 2396).